A 344-amino-acid chain; its full sequence is Methionine import ATP-binding protein MetN (344 aa).

The 240-residue stretch at 2–241 (IELKNIGKQF…PTTQLAQQFI (240 aa)) folds into the ABC transporter domain. Residue 38–45 (GASGAGKS) coordinates ATP.

It belongs to the ABC transporter superfamily. Methionine importer (TC 3.A.1.24) family. In terms of assembly, the complex is composed of two ATP-binding proteins (MetN), two transmembrane proteins (MetI) and a solute-binding protein (MetQ).

It is found in the cell inner membrane. It carries out the reaction L-methionine(out) + ATP + H2O = L-methionine(in) + ADP + phosphate + H(+). It catalyses the reaction D-methionine(out) + ATP + H2O = D-methionine(in) + ADP + phosphate + H(+). Functionally, part of the ABC transporter complex MetNIQ involved in methionine import. Responsible for energy coupling to the transport system. The protein is Methionine import ATP-binding protein MetN of Haemophilus ducreyi (strain 35000HP / ATCC 700724).